Reading from the N-terminus, the 161-residue chain is Transcriptional repressor NrdR (161 aa).

Residues 1 to 11 (MRCPSCSSLDT) show a composition bias toward polar residues. Residues 1–20 (MRCPSCSSLDTQVKDSRPTE) form a disordered region. Residues 3 to 34 (CPSCSSLDTQVKDSRPTEDSAVIRRRRVCMAC) fold into a zinc finger. Positions 49–139 (LTVIKRNGRR…VYRNFREAKD (91 aa)) constitute an ATP-cone domain.

Belongs to the NrdR family. Zn(2+) is required as a cofactor.

Negatively regulates transcription of bacterial ribonucleotide reductase nrd genes and operons by binding to NrdR-boxes. This chain is Transcriptional repressor NrdR, found in Rhodopseudomonas palustris (strain BisB18).